The chain runs to 325 residues: Fatty acid synthase alpha subunit hexA (325 aa).

Mg(2+) is bound at residue D209. Acetyl-CoA contacts are provided by residues 209 to 211, 255 to 265, 279 to 282, and 301 to 303; these read DLV, EAVFKCLHTQT, KSDN, and ISH. Residue S302 coordinates Mg(2+).

It belongs to the thiolase-like superfamily. Fungal fatty acid synthetase subunit alpha family. As to quaternary structure, [Alpha(6)beta(6)] hexamers of two multifunctional subunits (alpha and beta). In terms of processing, 4'-phosphopantetheine is transferred from CoA to a specific serine of the acyl carrier domain by the C-terminal PPT domain. This modification is essential for activity because fatty acids are bound in thioester linkage to the sulfhydryl of the prosthetic group.

The enzyme catalyses acetyl-CoA + n malonyl-CoA + 2n NADPH + 4n H(+) = a long-chain-acyl-CoA + n CoA + n CO2 + 2n NADP(+).. The catalysed reaction is a fatty acyl-[ACP] + malonyl-[ACP] + H(+) = a 3-oxoacyl-[ACP] + holo-[ACP] + CO2. It carries out the reaction a (3R)-hydroxyacyl-[ACP] + NADP(+) = a 3-oxoacyl-[ACP] + NADPH + H(+). It participates in mycotoxin biosynthesis. Fatty acid synthase alpha subunit; part of the fragmented gene cluster that mediates the biosynthesis of dothistromin (DOTH), a polyketide toxin very similar in structure to the aflatoxin precursor, versicolorin B. The first step of the pathway is the conversion of acetate to norsolorinic acid (NOR) and requires the fatty acid synthase subunits hexA and hexB, as well as the polyketide synthase pksA. PksA combines a hexanoyl starter unit and 7 malonyl-CoA extender units to synthesize the precursor NOR. The hexanoyl starter unit is provided to the acyl-carrier protein (ACP) domain by the fungal fatty acid synthase hexA/hexB. The second step is the conversion of NOR to averantin (AVN) and requires the norsolorinic acid ketoreductase nor1, which catalyzes the dehydration of norsolorinic acid to form (1'S)-averantin. The cytochrome P450 monooxygenase avnA then catalyzes the hydroxylation of AVN to 5'hydroxyaverantin (HAVN). The next step is performed by adhA that transforms HAVN to averufin (AVF). Averufin might then be converted to hydroxyversicolorone by cypX and avfA. Hydroxyversicolorone is further converted versiconal hemiacetal acetate (VHA) by moxY. VHA is then the substrate for the versiconal hemiacetal acetate esterase est1 to yield versiconal (VAL). Versicolorin B synthase vbsA then converts VAL to versicolorin B (VERB) by closing the bisfuran ring. Then, the activity of the versicolorin B desaturase verB leads to versicolorin A (VERA). DotB, a predicted chloroperoxidase, may perform epoxidation of the A-ring of VERA. Alternatively, a cytochrome P450, such as cypX or avnA could catalyze this step. It is also possible that another, uncharacterized, cytochrome P450 enzyme is responsible for this step. Opening of the epoxide could potentially be achieved by the epoxide hydrolase epoA. However, epoA seems not to be required for DOTH biosynthesis, but other epoxide hydrolases may have the ability to complement this hydrolysis. Alternatively, opening of the epoxide ring could be achieved non-enzymatically. The next step is the deoxygenation of ring A to yield the 5,8-dihydroxyanthraquinone which is most likely catalyzed by the NADPH dehydrogenase encoded by ver1. The last stages of DOTH biosynthesis are proposed to involve hydroxylation of the bisfuran. OrdB and norB might have oxidative roles here. An alternative possibility is that cytochrome P450 monoogenases such as avnA and cypX might perform these steps in addition to previously proposed steps. The chain is Fatty acid synthase alpha subunit hexA from Dothistroma septosporum (Red band needle blight fungus).